We begin with the raw amino-acid sequence, 155 residues long: 6,7-dimethyl-8-ribityllumazine synthase (155 aa).

5-amino-6-(D-ribitylamino)uracil contacts are provided by residues Phe24, 58–60, and 82–84; these read AFE and VII. 87–88 provides a ligand contact to (2S)-2-hydroxy-3-oxobutyl phosphate; it reads ST. The Proton donor role is filled by His90. Phe115 contacts 5-amino-6-(D-ribitylamino)uracil. (2S)-2-hydroxy-3-oxobutyl phosphate is bound at residue Arg129.

Belongs to the DMRL synthase family.

The catalysed reaction is (2S)-2-hydroxy-3-oxobutyl phosphate + 5-amino-6-(D-ribitylamino)uracil = 6,7-dimethyl-8-(1-D-ribityl)lumazine + phosphate + 2 H2O + H(+). Its pathway is cofactor biosynthesis; riboflavin biosynthesis; riboflavin from 2-hydroxy-3-oxobutyl phosphate and 5-amino-6-(D-ribitylamino)uracil: step 1/2. Catalyzes the formation of 6,7-dimethyl-8-ribityllumazine by condensation of 5-amino-6-(D-ribitylamino)uracil with 3,4-dihydroxy-2-butanone 4-phosphate. This is the penultimate step in the biosynthesis of riboflavin. The chain is 6,7-dimethyl-8-ribityllumazine synthase from Pelodictyon phaeoclathratiforme (strain DSM 5477 / BU-1).